Reading from the N-terminus, the 883-residue chain is Integrator complex subunit 6 (883 aa).

In terms of domain architecture, VWFA spans 3-227; that stretch reads ILLFLIDTSA…QCLESLVQKV (225 aa). The Inhibitory loop motif lies at 625–632; the sequence is MMIDEADE. Residues 666 to 686 are disordered; that stretch reads RRQSPAVNSHIGGKGPPAPMT. Serine 800 carries the post-translational modification Phosphoserine.

It belongs to the Integrator subunit 6 family. As to quaternary structure, component of the Integrator complex, composed of core subunits INTS1, INTS2, INTS3, INTS4, INTS5, INTS6, INTS7, INTS8, INTS9/RC74, INTS10, INTS11/CPSF3L, INTS12, INTS13, INTS14 and INTS15. The core complex associates with protein phosphatase 2A subunits PPP2CA and PPP2R1A, to form the Integrator-PP2A (INTAC) complex.

The protein resides in the nucleus. The protein localises to the chromosome. Functionally, component of the integrator complex, a multiprotein complex that terminates RNA polymerase II (Pol II) transcription in the promoter-proximal region of genes. The integrator complex provides a quality checkpoint during transcription elongation by driving premature transcription termination of transcripts that are unfavorably configured for transcriptional elongation: the complex terminates transcription by (1) catalyzing dephosphorylation of the C-terminal domain (CTD) of Pol II subunit POLR2A/RPB1 and SUPT5H/SPT5, (2) degrading the exiting nascent RNA transcript via endonuclease activity and (3) promoting the release of Pol II from bound DNA. The integrator complex is also involved in terminating the synthesis of non-coding Pol II transcripts, such as enhancer RNAs (eRNAs), small nuclear RNAs (snRNAs), telomerase RNAs and long non-coding RNAs (lncRNAs). Within the integrator complex, INTS6 acts as a molecular adapter that promotes assembly of protein phosphatase 2A (PP2A) subunits to the integrator core complex, promoting recruitment of PP2A to transcription pause-release checkpoint. Mediates recruitment of cytoplasmic dynein to the nuclear envelope, probably as component of the integrator complex. The polypeptide is Integrator complex subunit 6 (Ints6) (Mus musculus (Mouse)).